The sequence spans 403 residues: Presqualene diphosphate synthase (403 aa).

Positions 84, 87, and 88 each coordinate Mg(2+).

The protein belongs to the phytoene/squalene synthase family. Mg(2+) serves as cofactor.

It carries out the reaction 2 (2E,6E)-farnesyl diphosphate = presqualene diphosphate + diphosphate. In terms of biological role, catalyzes the biosynthesis of presqualene diphosphate (PSPP). Works in combination with SSL-2 or SSL-3 to produce respectively squalene or botryococcene. In most other species, farnesyl diphosphate (FPP) is converted into squalene in a two-step reaction by a single enzyme. The polypeptide is Presqualene diphosphate synthase (SSL-1) (Botryococcus braunii (Green alga)).